We begin with the raw amino-acid sequence, 250 residues long: 2,3-bisphosphoglycerate-dependent phosphoglycerate mutase (250 aa).

Substrate-binding positions include 10-17 (RHGESQWN), 23-24 (TG), R62, 89-92 (ERHY), K100, 116-117 (RR), and 185-186 (GN). Residue H11 is the Tele-phosphohistidine intermediate of the active site. Catalysis depends on E89, which acts as the Proton donor/acceptor.

It belongs to the phosphoglycerate mutase family. BPG-dependent PGAM subfamily. Homodimer.

It catalyses the reaction (2R)-2-phosphoglycerate = (2R)-3-phosphoglycerate. It participates in carbohydrate degradation; glycolysis; pyruvate from D-glyceraldehyde 3-phosphate: step 3/5. Its function is as follows. Catalyzes the interconversion of 2-phosphoglycerate and 3-phosphoglycerate. This Salmonella dublin (strain CT_02021853) protein is 2,3-bisphosphoglycerate-dependent phosphoglycerate mutase.